Reading from the N-terminus, the 195-residue chain is Flavin prenyltransferase UbiX (195 aa).

Residues 17 to 19 (GGS), serine 43, 94 to 97 (SAGT), and arginine 129 each bind FMN. Dimethylallyl phosphate-binding residues include tyrosine 159 and arginine 175.

It belongs to the UbiX/PAD1 family.

It catalyses the reaction dimethylallyl phosphate + FMNH2 = prenylated FMNH2 + phosphate. In terms of biological role, flavin prenyltransferase that catalyzes the synthesis of the prenylated FMN cofactor (prenyl-FMN) for 4-hydroxy-3-polyprenylbenzoic acid decarboxylase UbiD. The prenyltransferase is metal-independent and links a dimethylallyl moiety from dimethylallyl monophosphate (DMAP) to the flavin N5 and C6 atoms of FMN. This chain is Flavin prenyltransferase UbiX, found in Deinococcus radiodurans (strain ATCC 13939 / DSM 20539 / JCM 16871 / CCUG 27074 / LMG 4051 / NBRC 15346 / NCIMB 9279 / VKM B-1422 / R1).